We begin with the raw amino-acid sequence, 145 residues long: D-aminoacyl-tRNA deacylase (145 aa).

The Gly-cisPro motif, important for rejection of L-amino acids signature appears at 137–138 (GP).

The protein belongs to the DTD family. As to quaternary structure, homodimer.

It localises to the cytoplasm. It carries out the reaction glycyl-tRNA(Ala) + H2O = tRNA(Ala) + glycine + H(+). The enzyme catalyses a D-aminoacyl-tRNA + H2O = a tRNA + a D-alpha-amino acid + H(+). An aminoacyl-tRNA editing enzyme that deacylates mischarged D-aminoacyl-tRNAs. Also deacylates mischarged glycyl-tRNA(Ala), protecting cells against glycine mischarging by AlaRS. Acts via tRNA-based rather than protein-based catalysis; rejects L-amino acids rather than detecting D-amino acids in the active site. By recycling D-aminoacyl-tRNA to D-amino acids and free tRNA molecules, this enzyme counteracts the toxicity associated with the formation of D-aminoacyl-tRNA entities in vivo and helps enforce protein L-homochirality. In Cereibacter sphaeroides (strain KD131 / KCTC 12085) (Rhodobacter sphaeroides), this protein is D-aminoacyl-tRNA deacylase.